Consider the following 388-residue polypeptide: Chaperone protein DnaJ (388 aa).

The region spanning 6–71 is the J domain; the sequence is DYYEILGVPR…EKRKLYDQFG (66 aa). The segment at 147-229 adopts a CR-type zinc-finger fold; the sequence is GCEKEIPIYR…CGGTGNVRRQ (83 aa). C160, C163, C177, C180, C203, C206, C217, and C220 together coordinate Zn(2+). CXXCXGXG motif repeat units follow at residues 160 to 167, 177 to 184, 203 to 210, and 217 to 224; these read CSVCGGSG, CQKCGGTG, CDACGGTG, and CRECGGTG.

Belongs to the DnaJ family. Homodimer. Zn(2+) is required as a cofactor.

Its subcellular location is the cytoplasm. Its function is as follows. Participates actively in the response to hyperosmotic and heat shock by preventing the aggregation of stress-denatured proteins and by disaggregating proteins, also in an autonomous, DnaK-independent fashion. Unfolded proteins bind initially to DnaJ; upon interaction with the DnaJ-bound protein, DnaK hydrolyzes its bound ATP, resulting in the formation of a stable complex. GrpE releases ADP from DnaK; ATP binding to DnaK triggers the release of the substrate protein, thus completing the reaction cycle. Several rounds of ATP-dependent interactions between DnaJ, DnaK and GrpE are required for fully efficient folding. Also involved, together with DnaK and GrpE, in the DNA replication of plasmids through activation of initiation proteins. The protein is Chaperone protein DnaJ of Caldicellulosiruptor bescii (strain ATCC BAA-1888 / DSM 6725 / KCTC 15123 / Z-1320) (Anaerocellum thermophilum).